Here is a 123-residue protein sequence, read N- to C-terminus: Integration host factor subunit alpha (123 aa).

Positions 97-123 (NANGTASSMSSSANAAAGDKSESASGT) are disordered. Over residues 102-113 (ASSMSSSANAAA) the composition is skewed to low complexity.

It belongs to the bacterial histone-like protein family. As to quaternary structure, heterodimer of an alpha and a beta chain.

In terms of biological role, this protein is one of the two subunits of integration host factor, a specific DNA-binding protein that functions in genetic recombination as well as in transcriptional and translational control. The polypeptide is Integration host factor subunit alpha (Rhodopseudomonas palustris (strain HaA2)).